A 216-amino-acid chain; its full sequence is Large ribosomal subunit protein uL1z (216 aa).

The protein belongs to the universal ribosomal protein uL1 family. As to quaternary structure, interacts with the GTPase NUG2.

The sequence is that of Large ribosomal subunit protein uL1z (RPL10AA) from Arabidopsis thaliana (Mouse-ear cress).